A 443-amino-acid chain; its full sequence is Threonine/serine transporter TdcC (443 aa).

The next 11 helical transmembrane spans lie at threonine 22–isoleucine 42, alanine 44–phenylalanine 64, glycine 97–valine 117, phenylalanine 140–methionine 160, valine 163–isoleucine 183, isoleucine 207–isoleucine 227, alanine 259–serine 279, alanine 319–leucine 339, isoleucine 366–leucine 386, isoleucine 389–isoleucine 409, and aspartate 423–phenylalanine 443.

The protein belongs to the amino acid/polyamine transporter 2 family. SdaC/TdcC subfamily.

It localises to the cell inner membrane. The catalysed reaction is L-threonine(in) + H(+)(in) = L-threonine(out) + H(+)(out). It catalyses the reaction L-serine(in) + H(+)(in) = L-serine(out) + H(+)(out). Its function is as follows. Involved in the import of threonine and serine into the cell, with the concomitant import of a proton (symport system). The sequence is that of Threonine/serine transporter TdcC from Salmonella paratyphi A (strain ATCC 9150 / SARB42).